The following is a 450-amino-acid chain: Glucose-6-phosphate isomerase (450 aa).

Glu-290 serves as the catalytic Proton donor. Active-site residues include His-311 and Lys-425.

Belongs to the GPI family.

It localises to the cytoplasm. The catalysed reaction is alpha-D-glucose 6-phosphate = beta-D-fructose 6-phosphate. It participates in carbohydrate biosynthesis; gluconeogenesis. It functions in the pathway carbohydrate degradation; glycolysis; D-glyceraldehyde 3-phosphate and glycerone phosphate from D-glucose: step 2/4. Functionally, catalyzes the reversible isomerization of glucose-6-phosphate to fructose-6-phosphate. This Listeria monocytogenes serovar 1/2a (strain ATCC BAA-679 / EGD-e) protein is Glucose-6-phosphate isomerase.